The following is a 430-amino-acid chain: MGAIQALRGTRDILPHEVGYWQQVERVAAEILSRALYLEIRPPIFEQTALFERGIGEGTDVVGKEMYTFKDRGDRSITLRPEGTAGVVRSFIEHNLYATGGVQRLWYTGPMFRYERPQAGRQRQFHQIGLELLGSGDYRADVEVIALATDILQTLGLKNLKLDLNSVGNREDRQNYRQALVDYLTPYKAQLDPDSQDRLERNPLRILDSKDERTKIICQDAPSILEYLGTESKRHFEQVQQLLGDLNIKYQLNPCLVRGLDYYTHTAFEIQSDDLGAQATVCGGGRYDGLVVELGGPATPAVGWAIGMERLILLLQQLQSTPTLTPDIYIVSRGEKAESQGLILAQKLRHWGLSVELDLSGSAFGKQFKRADRTGAIACLILGDQEAENQTVQLKWMTSSQQQTLTQVELLSQLEELKQSFDRHRQSRDD.

It belongs to the class-II aminoacyl-tRNA synthetase family. Homodimer.

It is found in the cytoplasm. It catalyses the reaction tRNA(His) + L-histidine + ATP = L-histidyl-tRNA(His) + AMP + diphosphate + H(+). This is Histidine--tRNA ligase from Gloeothece citriformis (strain PCC 7424) (Cyanothece sp. (strain PCC 7424)).